We begin with the raw amino-acid sequence, 128 residues long: Phosphoribosyl-AMP cyclohydrolase (128 aa).

Asp-79 is a Mg(2+) binding site. Cys-80 contributes to the Zn(2+) binding site. Mg(2+) contacts are provided by Asp-81 and Asp-83. Zn(2+)-binding residues include Cys-97 and Cys-104.

Belongs to the PRA-CH family. Homodimer. Requires Mg(2+) as cofactor. Zn(2+) is required as a cofactor.

Its subcellular location is the cytoplasm. It catalyses the reaction 1-(5-phospho-beta-D-ribosyl)-5'-AMP + H2O = 1-(5-phospho-beta-D-ribosyl)-5-[(5-phospho-beta-D-ribosylamino)methylideneamino]imidazole-4-carboxamide. It functions in the pathway amino-acid biosynthesis; L-histidine biosynthesis; L-histidine from 5-phospho-alpha-D-ribose 1-diphosphate: step 3/9. Its function is as follows. Catalyzes the hydrolysis of the adenine ring of phosphoribosyl-AMP. This Saccharophagus degradans (strain 2-40 / ATCC 43961 / DSM 17024) protein is Phosphoribosyl-AMP cyclohydrolase.